The chain runs to 108 residues: Vacuolar ATPase assembly integral membrane protein VMA21 (108 aa).

Topologically, residues 1–34 (MASRRSAAAKKEDFSFEAAATQSAHEAQEGFPSS) are cytoplasmic. Residues 35-55 (VIIKLVLVTVAMICAPLGTYF) traverse the membrane as a helical segment. Over 56-68 (GTLNTICGGDSSY) the chain is Lumenal. Residues 69 to 89 (AGALAAISVNVVLIIYLIIAA) form a helical membrane-spanning segment. At 90-108 (REDTGESEEERKGKEGKEE) the chain is on the cytoplasmic side.

The protein belongs to the VMA21 family.

Its subcellular location is the endoplasmic reticulum membrane. It is found in the endoplasmic reticulum-Golgi intermediate compartment membrane. The protein resides in the cytoplasmic vesicle. It localises to the COPII-coated vesicle membrane. Its function is as follows. Required for the assembly of the V0 complex of the vacuolar ATPase (V-ATPase) in the endoplasmic reticulum. The sequence is that of Vacuolar ATPase assembly integral membrane protein VMA21 from Ajellomyces capsulatus (strain NAm1 / WU24) (Darling's disease fungus).